The sequence spans 318 residues: Deoxyribose-phosphate aldolase (318 aa).

Asp-155 serves as the catalytic Proton donor/acceptor. Lys-218 functions as the Schiff-base intermediate with acetaldehyde in the catalytic mechanism. The Proton donor/acceptor role is filled by Lys-254.

The protein belongs to the DeoC/FbaB aldolase family. DeoC type 2 subfamily. As to quaternary structure, interacts with YBX1.

It is found in the cytoplasm. The protein resides in the cytoplasmic granule. The protein localises to the nucleus. It carries out the reaction 2-deoxy-D-ribose 5-phosphate = D-glyceraldehyde 3-phosphate + acetaldehyde. Its pathway is carbohydrate degradation; 2-deoxy-D-ribose 1-phosphate degradation; D-glyceraldehyde 3-phosphate and acetaldehyde from 2-deoxy-alpha-D-ribose 1-phosphate: step 2/2. Its function is as follows. Catalyzes a reversible aldol reaction between acetaldehyde and D-glyceraldehyde 3-phosphate to generate 2-deoxy-D-ribose 5-phosphate. Participates in stress granule (SG) assembly. May allow ATP production from extracellular deoxyinosine in conditions of energy deprivation. This is Deoxyribose-phosphate aldolase (Dera) from Mus musculus (Mouse).